The sequence spans 185 residues: Large ribosomal subunit protein bL25 (185 aa).

This sequence belongs to the bacterial ribosomal protein bL25 family. CTC subfamily. As to quaternary structure, part of the 50S ribosomal subunit; part of the 5S rRNA/L5/L18/L25 subcomplex. Contacts the 5S rRNA. Binds to the 5S rRNA independently of L5 and L18.

In terms of biological role, this is one of the proteins that binds to the 5S RNA in the ribosome where it forms part of the central protuberance. This chain is Large ribosomal subunit protein bL25, found in Chlamydia trachomatis serovar L2 (strain ATCC VR-902B / DSM 19102 / 434/Bu).